Consider the following 601-residue polypeptide: Aspartate--tRNA(Asp/Asn) ligase (601 aa).

Glu-174 contacts L-aspartate. An aspartate region spans residues 198-201 (QLFK). Arg-220 serves as a coordination point for L-aspartate. Residues 220-222 (RDE) and Gln-229 contribute to the ATP site. An L-aspartate-binding site is contributed by His-459. Glu-493 provides a ligand contact to ATP. Residue Arg-500 participates in L-aspartate binding. ATP is bound at residue 545–548 (GLDR).

It belongs to the class-II aminoacyl-tRNA synthetase family. Type 1 subfamily. Homodimer.

It localises to the cytoplasm. The catalysed reaction is tRNA(Asx) + L-aspartate + ATP = L-aspartyl-tRNA(Asx) + AMP + diphosphate. Aspartyl-tRNA synthetase with relaxed tRNA specificity since it is able to aspartylate not only its cognate tRNA(Asp) but also tRNA(Asn). Reaction proceeds in two steps: L-aspartate is first activated by ATP to form Asp-AMP and then transferred to the acceptor end of tRNA(Asp/Asn). The chain is Aspartate--tRNA(Asp/Asn) ligase from Variovorax paradoxus (strain S110).